The sequence spans 882 residues: Valine--tRNA ligase (882 aa).

The short motif at 45–55 (PNVTGKLHLGH) is the 'HIGH' region element. The 'KMSKS' region motif lies at 519–523 (KMSKS). Residue Lys-522 coordinates ATP. Residues 808–877 (LADLLNVEEE…DATQERIVEM (70 aa)) adopt a coiled-coil conformation.

Belongs to the class-I aminoacyl-tRNA synthetase family. ValS type 1 subfamily. In terms of assembly, monomer.

Its subcellular location is the cytoplasm. It catalyses the reaction tRNA(Val) + L-valine + ATP = L-valyl-tRNA(Val) + AMP + diphosphate. Functionally, catalyzes the attachment of valine to tRNA(Val). As ValRS can inadvertently accommodate and process structurally similar amino acids such as threonine, to avoid such errors, it has a 'posttransfer' editing activity that hydrolyzes mischarged Thr-tRNA(Val) in a tRNA-dependent manner. The sequence is that of Valine--tRNA ligase from Streptococcus pyogenes serotype M6 (strain ATCC BAA-946 / MGAS10394).